The following is a 183-amino-acid chain: Photosystem I assembly protein Ycf4 (183 aa).

The next 2 helical transmembrane spans lie at Tyr21 to Leu43 and Phe58 to Trp80.

The protein belongs to the Ycf4 family.

The protein resides in the plastid. The protein localises to the chloroplast thylakoid membrane. Functionally, seems to be required for the assembly of the photosystem I complex. This chain is Photosystem I assembly protein Ycf4, found in Nephroselmis olivacea (Green alga).